Here is a 65-residue protein sequence, read N- to C-terminus: uncharacterized protein (65 aa).

Residues 37–57 (ILAIMTSVLPVLLIYIIWIFI) form a helical membrane-spanning segment.

It is found in the cell membrane. This is an uncharacterized protein from Bacillus subtilis (strain 168).